Reading from the N-terminus, the 759-residue chain is 5-methyltetrahydropteroyltriglutamate--homocysteine methyltransferase (759 aa).

The segment covering methionine 1–glycine 16 has biased composition (polar residues). The segment at methionine 1–proline 22 is disordered. Residues arginine 24–lysine 27 and lysine 118 contribute to the 5-methyltetrahydropteroyltri-L-glutamate site. L-homocysteine-binding positions include isoleucine 437 to serine 439 and glutamate 490. L-methionine is bound by residues isoleucine 437–serine 439 and glutamate 490. 5-methyltetrahydropteroyltri-L-glutamate-binding positions include arginine 521–cysteine 522 and tryptophan 567. Position 605 (aspartate 605) interacts with L-homocysteine. An L-methionine-binding site is contributed by aspartate 605. 5-methyltetrahydropteroyltri-L-glutamate is bound at residue glutamate 611. Residues histidine 647, cysteine 649, and glutamate 671 each contribute to the Zn(2+) site. Histidine 700 (proton donor) is an active-site residue. Cysteine 732 is a binding site for Zn(2+).

Belongs to the vitamin-B12 independent methionine synthase family. The cofactor is Zn(2+).

It catalyses the reaction 5-methyltetrahydropteroyltri-L-glutamate + L-homocysteine = tetrahydropteroyltri-L-glutamate + L-methionine. Its pathway is amino-acid biosynthesis; L-methionine biosynthesis via de novo pathway; L-methionine from L-homocysteine (MetE route): step 1/1. In terms of biological role, catalyzes the transfer of a methyl group from 5-methyltetrahydrofolate to homocysteine resulting in methionine formation. The chain is 5-methyltetrahydropteroyltriglutamate--homocysteine methyltransferase from Mycobacterium tuberculosis (strain ATCC 25177 / H37Ra).